A 700-amino-acid polypeptide reads, in one-letter code: Mitosis inducer protein blt1 (700 aa).

Composition is skewed to polar residues over residues 1–11 (MSKSAFTSKSQ) and 43–53 (PRSTALPNLSN). Disordered regions lie at residues 1 to 53 (MSKS…NLSN) and 266 to 293 (TNNR…SKDQ). Residues 273 to 284 (GSDGSNSNFNGG) show a composition bias toward low complexity. A coiled-coil region spans residues 496–575 (SVALDDHNRQ…LNMLQKLSMQ (80 aa)). Disordered stretches follow at residues 634-659 (FSSF…RKPS) and 671-700 (SSGS…SSKM). S636 is modified (phosphoserine).

In terms of assembly, interacts with cdr2, mid1 and sad1.

The protein localises to the cytoplasm. The protein resides in the cytoskeleton. In terms of biological role, at the onset of mitosis, forms a medial ring structure before the arrangement of the medial actin ring. Essential for the central positioning of the division septum before the cell divides. The protein is Mitosis inducer protein blt1 (blt1) of Schizosaccharomyces pombe (strain 972 / ATCC 24843) (Fission yeast).